The chain runs to 83 residues: Mu-theraphotoxin-Hhn2b 3 (83 aa).

Positions 1 to 21 (MKASMFLALAGLVLLFVVCYA) are cleaved as a signal peptide. The propeptide occupies 22–48 (SESEEKEFPRELISKIFAVDDFKGEVR). 3 cysteine pairs are disulfide-bonded: C50-C65, C57-C70, and C64-C77. Residue L81 is modified to Leucine amide.

It belongs to the neurotoxin 10 (Hwtx-1) family. 14 (Hntx-1) subfamily. Monomer. As to expression, expressed by the venom gland.

It localises to the secreted. Its function is as follows. Weakly blocks the rat SCN2A/SCN1B (Nav1.2/beta-1) sodium channel (IC(50)=68 uM) and the insect sodium channel para/tipE (IC(50)=4.3 uM), without altering the activation or inactivation kinetics (depressant toxin). In Cyriopagopus hainanus (Chinese bird spider), this protein is Mu-theraphotoxin-Hhn2b 3.